A 549-amino-acid polypeptide reads, in one-letter code: Chaperonin GroEL 1 (549 aa).

ATP-binding positions include 30–33 (TLGP), Lys-51, 87–91 (DGTTT), Gly-415, 479–481 (NAA), and Asp-495.

The protein belongs to the chaperonin (HSP60) family. In terms of assembly, forms a cylinder of 14 subunits composed of two heptameric rings stacked back-to-back. Interacts with the co-chaperonin GroES.

Its subcellular location is the cytoplasm. It carries out the reaction ATP + H2O + a folded polypeptide = ADP + phosphate + an unfolded polypeptide.. Together with its co-chaperonin GroES, plays an essential role in assisting protein folding. The GroEL-GroES system forms a nano-cage that allows encapsulation of the non-native substrate proteins and provides a physical environment optimized to promote and accelerate protein folding. The chain is Chaperonin GroEL 1 from Azoarcus sp. (strain BH72).